A 196-amino-acid chain; its full sequence is ATP-dependent Clp protease proteolytic subunit 1 (196 aa).

Ser96 acts as the Nucleophile in catalysis. His121 is an active-site residue.

The protein belongs to the peptidase S14 family. In terms of assembly, fourteen ClpP subunits assemble into 2 heptameric rings which stack back to back to give a disk-like structure with a central cavity, resembling the structure of eukaryotic proteasomes.

It localises to the cytoplasm. It catalyses the reaction Hydrolysis of proteins to small peptides in the presence of ATP and magnesium. alpha-casein is the usual test substrate. In the absence of ATP, only oligopeptides shorter than five residues are hydrolyzed (such as succinyl-Leu-Tyr-|-NHMec, and Leu-Tyr-Leu-|-Tyr-Trp, in which cleavage of the -Tyr-|-Leu- and -Tyr-|-Trp bonds also occurs).. Its function is as follows. Cleaves peptides in various proteins in a process that requires ATP hydrolysis. Has a chymotrypsin-like activity. Plays a major role in the degradation of misfolded proteins. The chain is ATP-dependent Clp protease proteolytic subunit 1 from Prochlorococcus marinus (strain SARG / CCMP1375 / SS120).